Reading from the N-terminus, the 446-residue chain is Maltoporin (446 aa).

Residues 1 to 25 form the signal peptide; it reads MMTTLRKLPLAVAVAAGMMSVQAMA.

It belongs to the porin LamB (TC 1.B.3) family. In terms of assembly, homotrimer formed of three 18-stranded antiparallel beta-barrels, containing three independent channels.

The protein resides in the cell outer membrane. It catalyses the reaction beta-maltose(in) = beta-maltose(out). In terms of biological role, involved in the transport of maltose and maltodextrins. The chain is Maltoporin from Escherichia fergusonii (strain ATCC 35469 / DSM 13698 / CCUG 18766 / IAM 14443 / JCM 21226 / LMG 7866 / NBRC 102419 / NCTC 12128 / CDC 0568-73).